The following is an 85-amino-acid chain: UPF0386 protein Atu1321 (85 aa).

This sequence belongs to the UPF0386 family.

The sequence is that of UPF0386 protein Atu1321 from Agrobacterium fabrum (strain C58 / ATCC 33970) (Agrobacterium tumefaciens (strain C58)).